A 436-amino-acid chain; its full sequence is Trigger factor (436 aa).

Positions 163 to 248 (GDRVTVDFEG…VKKIEAAHLP (86 aa)) constitute a PPIase FKBP-type domain.

Belongs to the FKBP-type PPIase family. Tig subfamily.

Its subcellular location is the cytoplasm. It catalyses the reaction [protein]-peptidylproline (omega=180) = [protein]-peptidylproline (omega=0). Its function is as follows. Involved in protein export. Acts as a chaperone by maintaining the newly synthesized protein in an open conformation. Functions as a peptidyl-prolyl cis-trans isomerase. The sequence is that of Trigger factor from Paracidovorax citrulli (strain AAC00-1) (Acidovorax citrulli).